A 150-amino-acid polypeptide reads, in one-letter code: Protein-export protein SecB (150 aa).

Belongs to the SecB family. In terms of assembly, homotetramer, a dimer of dimers. One homotetramer interacts with 1 SecA dimer.

Its subcellular location is the cytoplasm. One of the proteins required for the normal export of preproteins out of the cell cytoplasm. It is a molecular chaperone that binds to a subset of precursor proteins, maintaining them in a translocation-competent state. It also specifically binds to its receptor SecA. This Acidovorax ebreus (strain TPSY) (Diaphorobacter sp. (strain TPSY)) protein is Protein-export protein SecB.